A 277-amino-acid polypeptide reads, in one-letter code: Protein PTST, chloroplastic (277 aa).

A chloroplast-targeting transit peptide spans 1–44 (MGCVPRIEFGCSSQSLTLSWNLRAWNLCRLNTISHFQKLPYPLV). Residues 95-152 (DTERSKLVKKLSEANQQNRFLKRQLKTQEHEITNIKTELALMELEVQALVKLAEEIAN) adopt a coiled-coil conformation.

In terms of assembly, interacts with GBSS1.

The protein localises to the plastid. It is found in the chloroplast stroma. Its function is as follows. Involved in targeting GBSS1 to the starch granule. Was originally thought to be a carbohydrate-binding scaffold protein, but it has been shown that it is mainly found as a soluble protein and that interaction with GBSS1 is a pre-requisite for subsequent starch granule binding. Dissociation from starch as a function of pH, Mg(2+) concentration or redox state is not observed. Interacts primarily with amylopectin and is required for amylose synthesis. The sequence is that of Protein PTST, chloroplastic from Arabidopsis thaliana (Mouse-ear cress).